The sequence spans 252 residues: Thiazole synthase (252 aa).

The active-site Schiff-base intermediate with DXP is the lysine 98. 1-deoxy-D-xylulose 5-phosphate is bound by residues glycine 159, 185–186 (AG), and 207–208 (AT).

The protein belongs to the ThiG family. As to quaternary structure, homotetramer. Forms heterodimers with either ThiH or ThiS.

Its subcellular location is the cytoplasm. The enzyme catalyses [ThiS sulfur-carrier protein]-C-terminal-Gly-aminoethanethioate + 2-iminoacetate + 1-deoxy-D-xylulose 5-phosphate = [ThiS sulfur-carrier protein]-C-terminal Gly-Gly + 2-[(2R,5Z)-2-carboxy-4-methylthiazol-5(2H)-ylidene]ethyl phosphate + 2 H2O + H(+). It participates in cofactor biosynthesis; thiamine diphosphate biosynthesis. Catalyzes the rearrangement of 1-deoxy-D-xylulose 5-phosphate (DXP) to produce the thiazole phosphate moiety of thiamine. Sulfur is provided by the thiocarboxylate moiety of the carrier protein ThiS. In vitro, sulfur can be provided by H(2)S. This is Thiazole synthase from Mycolicibacterium smegmatis (strain ATCC 700084 / mc(2)155) (Mycobacterium smegmatis).